We begin with the raw amino-acid sequence, 954 residues long: Glycine dehydrogenase (decarboxylating) (954 aa).

K704 is modified (N6-(pyridoxal phosphate)lysine).

Belongs to the GcvP family. As to quaternary structure, the glycine cleavage system is composed of four proteins: P, T, L and H. Requires pyridoxal 5'-phosphate as cofactor.

The catalysed reaction is N(6)-[(R)-lipoyl]-L-lysyl-[glycine-cleavage complex H protein] + glycine + H(+) = N(6)-[(R)-S(8)-aminomethyldihydrolipoyl]-L-lysyl-[glycine-cleavage complex H protein] + CO2. The glycine cleavage system catalyzes the degradation of glycine. The P protein binds the alpha-amino group of glycine through its pyridoxal phosphate cofactor; CO(2) is released and the remaining methylamine moiety is then transferred to the lipoamide cofactor of the H protein. The sequence is that of Glycine dehydrogenase (decarboxylating) from Rhizobium etli (strain ATCC 51251 / DSM 11541 / JCM 21823 / NBRC 15573 / CFN 42).